A 98-amino-acid polypeptide reads, in one-letter code: Cystatin-B (98 aa).

Methionine 1 is subject to N-acetylmethionine. A Secondary area of contact motif is present at residues 46–50 (QIVAG).

The protein belongs to the cystatin family. In terms of tissue distribution, widely expressed. Highest expression in heart, liver and kidney. Lower levels in brain, lung and skeletal muscle. Lowest levels in spleen and testis.

The protein resides in the cytoplasm. Functionally, this is an intracellular thiol proteinase inhibitor. In Mus musculus (Mouse), this protein is Cystatin-B (Cstb).